The following is a 124-amino-acid chain: Large ribosomal subunit protein bL12 (124 aa).

The protein belongs to the bacterial ribosomal protein bL12 family. Homodimer. Part of the ribosomal stalk of the 50S ribosomal subunit. Forms a multimeric L10(L12)X complex, where L10 forms an elongated spine to which 2 to 4 L12 dimers bind in a sequential fashion. Binds GTP-bound translation factors.

Forms part of the ribosomal stalk which helps the ribosome interact with GTP-bound translation factors. Is thus essential for accurate translation. The chain is Large ribosomal subunit protein bL12 from Burkholderia cenocepacia (strain ATCC BAA-245 / DSM 16553 / LMG 16656 / NCTC 13227 / J2315 / CF5610) (Burkholderia cepacia (strain J2315)).